The chain runs to 226 residues: 2,3-bisphosphoglycerate-dependent phosphoglycerate mutase (226 aa).

Substrate is bound by residues 8–15 (RHGQSVWN), 21–22 (TG), Arg58, 109–112 (ERMY), Lys120, 136–137 (RR), and 180–181 (GN). His9 serves as the catalytic Tele-phosphohistidine intermediate. The active-site Proton donor/acceptor is the Glu109.

This sequence belongs to the phosphoglycerate mutase family. BPG-dependent PGAM subfamily.

The catalysed reaction is (2R)-2-phosphoglycerate = (2R)-3-phosphoglycerate. It functions in the pathway carbohydrate degradation; glycolysis; pyruvate from D-glyceraldehyde 3-phosphate: step 3/5. In terms of biological role, catalyzes the interconversion of 2-phosphoglycerate and 3-phosphoglycerate. This Chlamydia trachomatis serovar A (strain ATCC VR-571B / DSM 19440 / HAR-13) protein is 2,3-bisphosphoglycerate-dependent phosphoglycerate mutase.